The sequence spans 218 residues: Urease accessory protein UreG (218 aa).

22-29 (GPVGSGKT) contacts GTP.

Belongs to the SIMIBI class G3E GTPase family. UreG subfamily. Homodimer. UreD, UreF and UreG form a complex that acts as a GTP-hydrolysis-dependent molecular chaperone, activating the urease apoprotein by helping to assemble the nickel containing metallocenter of UreC. The UreE protein probably delivers the nickel.

It localises to the cytoplasm. In terms of biological role, facilitates the functional incorporation of the urease nickel metallocenter. This process requires GTP hydrolysis, probably effectuated by UreG. This Polaromonas sp. (strain JS666 / ATCC BAA-500) protein is Urease accessory protein UreG.